The primary structure comprises 363 residues: MASAVVSMVSTTASRFALLKVDSSSDSDSEKARGTHTSGKAHSGSAARGKTNVNEKKKEKRRKKKEQQQSEANELRNLAFKKIPPKASLGVSAAVQEHITHTVPKDAQKEDWQQWQQRDKQLTSDMFEADLEKALILSKLEYEESKVNGDGVNGVPQSKKVNKKDKRKNNQGKDKPLTVPLKDFQLEDQQAKKQEELKSPALPQGSGFFNKVEDDVTKIILNEKRKEHSTDVTESFATPEYSTEPALKDGKTEVLKQEIEKKEIALQQMRSKISQWEAKYREVKARNSQLLKMLQEGEMKDKAEILLQVDELLSIKNELTLQVTTLHAALEQERSKVKVLQAEQVRYQGGKKSKRNPELEHGR.

2 disordered regions span residues A17–A79 and V147–K182. Residues K50–A79 adopt a coiled-coil conformation. Residues K160–N170 show a composition bias toward basic residues. Coiled coils occupy residues D249–E298 and A328–Q348.

It belongs to the GKAP1 family.

It is found in the golgi apparatus. May play a role in the regulation of insulin-dependent IRS1 tyrosine phosphorylation in adipocytes. This chain is G kinase-anchoring protein 1-B (gkap1-b), found in Xenopus laevis (African clawed frog).